A 326-amino-acid polypeptide reads, in one-letter code: Apoptosis facilitator Bcl-2-like protein 14 (326 aa).

Ser44 carries the post-translational modification Phosphoserine. Residues 99-127 (TEKEEEPPSSPKEIHAQGPFPVERQGRNQ) form a disordered region. Positions 211 to 225 (IVELLKYSGDQLGRE) match the BH3 motif. The BH2 motif lies at 307 to 314 (WVQQNGGW).

Belongs to the Bcl-2 family. In terms of processing, phosphorylated by MELK, leading to inhibit its pro-apoptotic function.

It localises to the cytoplasm. Plays a role in apoptosis. In Rattus norvegicus (Rat), this protein is Apoptosis facilitator Bcl-2-like protein 14 (Bcl2l14).